We begin with the raw amino-acid sequence, 418 residues long: RuvB-like helicase 2 (418 aa).

65–72 (GDRGSGKT) contacts ATP.

It belongs to the RuvB family. As to quaternary structure, component of the SWR1 chromatin remodeling complex, the INO80 chromatin remodeling complex, and of the R2TP complex.

Its subcellular location is the nucleus. The catalysed reaction is ATP + H2O = ADP + phosphate + H(+). In terms of biological role, DNA helicase which participates in several chromatin remodeling complexes, including the SWR1 and the INO80 complexes. The SWR1 complex mediates the ATP-dependent exchange of histone H2A for the H2A variant HZT1 leading to transcriptional regulation of selected genes by chromatin remodeling. The INO80 complex remodels chromatin by shifting nucleosomes and is involved in DNA repair. Also involved in pre-rRNA processing. The sequence is that of RuvB-like helicase 2 (RVB2) from Encephalitozoon cuniculi (strain GB-M1) (Microsporidian parasite).